A 126-amino-acid polypeptide reads, in one-letter code: Small ribosomal subunit protein uS13 (126 aa).

The interval 98–126 (PVRGQSTKNNARTRKGRKKTVANKKKATK) is disordered. The span at 108–126 (ARTRKGRKKTVANKKKATK) shows a compositional bias: basic residues.

It belongs to the universal ribosomal protein uS13 family. Part of the 30S ribosomal subunit. Forms a loose heterodimer with protein S19. Forms two bridges to the 50S subunit in the 70S ribosome.

Located at the top of the head of the 30S subunit, it contacts several helices of the 16S rRNA. In the 70S ribosome it contacts the 23S rRNA (bridge B1a) and protein L5 of the 50S subunit (bridge B1b), connecting the 2 subunits; these bridges are implicated in subunit movement. Contacts the tRNAs in the A and P-sites. The sequence is that of Small ribosomal subunit protein uS13 from Phocaeicola vulgatus (strain ATCC 8482 / DSM 1447 / JCM 5826 / CCUG 4940 / NBRC 14291 / NCTC 11154) (Bacteroides vulgatus).